The sequence spans 446 residues: MTNKTPADLIVSARWILPVRPTGRLYEHCALVIRDGNIIEIVPTSGIDSQFDYQEHIDLPNQLLMPGLINMHGHAAMSLFRGLADDLPLMEWLQDHIWPAEGEWVDEQFVLDGTQLAMAEMLLSGTTCFSDMYFYPEAAAGAAFEAGMRAQINFPILDFPTQWGSGPEDYIHKGLKLHDNYRSVDLINIGFGPHAPYTVSDEPLKRIAVLAEELQAPIQIHMHETAQEVSDSIANFGVRPLQRIADLGLLGPATQLVHMTQIDEQDIALLTTYSAHVVHCPESNLKLASGFCPVHTLQEHCINTCLGTDGAASNNDLSLFDEMHTASLLGKGVAQRADALKSDTAIEMATINAATAMGLDNIVGSLEKGKRADFIAIDFSNLQQAPIYNLKSHLVNTHVSHLVTHVWVDGKCLVAERELQTLDTKDIYSKACAWQVKIQAQRASGK.

2 residues coordinate Zn(2+): histidine 72 and histidine 74. The substrate site is built by glutamate 101 and histidine 194. Zn(2+) is bound at residue histidine 221. Glutamate 224 and aspartate 309 together coordinate substrate. Aspartate 309 lines the Zn(2+) pocket.

It belongs to the metallo-dependent hydrolases superfamily. MTA/SAH deaminase family. It depends on Zn(2+) as a cofactor.

The enzyme catalyses S-adenosyl-L-homocysteine + H2O + H(+) = S-inosyl-L-homocysteine + NH4(+). The catalysed reaction is S-methyl-5'-thioadenosine + H2O + H(+) = S-methyl-5'-thioinosine + NH4(+). In terms of biological role, catalyzes the deamination of 5-methylthioadenosine and S-adenosyl-L-homocysteine into 5-methylthioinosine and S-inosyl-L-homocysteine, respectively. Is also able to deaminate adenosine. The polypeptide is 5-methylthioadenosine/S-adenosylhomocysteine deaminase (Saccharophagus degradans (strain 2-40 / ATCC 43961 / DSM 17024)).